The chain runs to 315 residues: L-lactate dehydrogenase (315 aa).

NAD(+) is bound by residues Val14, Asp35, and Tyr66. Residues Gln83, Arg89, and 121–124 (NPVD) each bind substrate. NAD(+) contacts are provided by residues 119–121 (VAN) and Ser144. 149–152 (DTAR) is a binding site for substrate. Catalysis depends on His176, which acts as the Proton acceptor. Tyr221 bears the Phosphotyrosine mark. Thr230 lines the substrate pocket.

Belongs to the LDH/MDH superfamily. LDH family. Homotetramer.

Its subcellular location is the cytoplasm. It carries out the reaction (S)-lactate + NAD(+) = pyruvate + NADH + H(+). The protein operates within fermentation; pyruvate fermentation to lactate; (S)-lactate from pyruvate: step 1/1. Functionally, catalyzes the conversion of lactate to pyruvate. The sequence is that of L-lactate dehydrogenase from Mesomycoplasma hyopneumoniae (strain 232) (Mycoplasma hyopneumoniae).